Consider the following 949-residue polypeptide: Valine--tRNA ligase (949 aa).

The short motif at 45-55 (PNVTGVLHMGH) is the 'HIGH' region element. A 'KMSKS' region motif is present at residues 561–565 (KMSKS). K564 is a binding site for ATP. Positions 882–949 (EELLKQEKTR…EIKEKLMTLP (68 aa)) form a coiled coil.

The protein belongs to the class-I aminoacyl-tRNA synthetase family. ValS type 1 subfamily. In terms of assembly, monomer.

The protein localises to the cytoplasm. It catalyses the reaction tRNA(Val) + L-valine + ATP = L-valyl-tRNA(Val) + AMP + diphosphate. In terms of biological role, catalyzes the attachment of valine to tRNA(Val). As ValRS can inadvertently accommodate and process structurally similar amino acids such as threonine, to avoid such errors, it has a 'posttransfer' editing activity that hydrolyzes mischarged Thr-tRNA(Val) in a tRNA-dependent manner. The sequence is that of Valine--tRNA ligase from Protochlamydia amoebophila (strain UWE25).